The following is a 435-amino-acid chain: Sulfopropanediol 3-dehydrogenase (435 aa).

NAD(+)-binding residues include Tyr119, Gln181, and Asn204. Residues Gln249 and His252 each contribute to the Zn(2+) site. Residues Glu319 and His320 each act as proton acceptor in the active site. Zn(2+)-binding residues include Asp353 and His412.

Belongs to the histidinol dehydrogenase family. HpsN subfamily. Zn(2+) is required as a cofactor.

It carries out the reaction (2R)-3-sulfopropanediol + 2 NAD(+) + H2O = (2R)-3-sulfolactate + 2 NADH + 3 H(+). In terms of biological role, catalyzes the NAD-dependent oxidation of (R)-2,3-dihydroxypropane-1-sulfonate to (R)-3-sulfolactate. In Ruegeria pomeroyi (strain ATCC 700808 / DSM 15171 / DSS-3) (Silicibacter pomeroyi), this protein is Sulfopropanediol 3-dehydrogenase.